A 70-amino-acid chain; its full sequence is Putative membrane protein insertion efficiency factor (70 aa).

The protein belongs to the UPF0161 family.

Its subcellular location is the cell inner membrane. In terms of biological role, could be involved in insertion of integral membrane proteins into the membrane. The protein is Putative membrane protein insertion efficiency factor of Geobacter sp. (strain M21).